Here is a 246-residue protein sequence, read N- to C-terminus: MPVQPPSKDTEEMEAEGDSAAEMNGEEEESEEERSGSQTESEEESSEMDDEDYERRRSECVSEMLDLEKQFSELKEKLFRERLSQLRLRLEEVGAERAPEYTEPLGGLQRSLKIRIQVAGIYKGFCLDVIRNKYECELQGAKQHLESEKLLLYDTLQGELQERIQRLEEDRQSLDLSSEWWDDKLHARGSSRSWDSLPPSKRKKAPLVSGPYIVYMLQEIDILEDWTAIKKARAAVSPQKRKSDGP.

A disordered region spans residues 1–57 (MPVQPPSKDTEEMEAEGDSAAEMNGEEEESEEERSGSQTESEEESSEMDDEDYERRR). 2 stretches are compositionally biased toward acidic residues: residues 11 to 32 (EEME…ESEE) and 40 to 52 (ESEE…DDED). Residues 51–98 (EDYERRRSECVSEMLDLEKQFSELKEKLFRERLSQLRLRLEEVGAERA) adopt a coiled-coil conformation. Glycyl lysine isopeptide (Lys-Gly) (interchain with G-Cter in SUMO2) cross-links involve residues Lys184 and Lys242.

Belongs to the BRMS1 family. As to quaternary structure, homohexamer (Potential). Interacts with SNX6, HDAC1 and RELA. Interacts with ARID4A. Identified in mSin3A corepressor complexes together with SIN3A, SIN3B, RBBP4, RBBP7, SAP30, SUDS3, ARID4A, HDAC1 and HDAC2. Interacts with SPOP; this recruits the protein to a ubiquitin ligase complex containing SPOP and CUL3. Post-translationally, ubiquitinated by a cullin-RING-based BCR (BTB-CUL3-RBX1) E3 ubiquitin-protein ligase complex containing SPOP, leading to proteasomal degradation. Expression levels are higher in term placentas than in early placentas. Low levels of expression observed in normal pregnancies and in molar pregnancies.

It localises to the nucleus. The protein resides in the cytoplasm. Its function is as follows. Transcriptional repressor. Down-regulates transcription activation by NF-kappa-B by promoting the deacetylation of RELA at 'Lys-310'. Promotes HDAC1 binding to promoter regions. Down-regulates expression of anti-apoptotic genes that are controlled by NF-kappa-B. Promotes apoptosis in cells that have inadequate adherence to a substrate, a process called anoikis, and may thereby inhibit metastasis. May be a mediator of metastasis suppression in breast carcinoma. The chain is Breast cancer metastasis-suppressor 1 (BRMS1) from Homo sapiens (Human).